Reading from the N-terminus, the 257-residue chain is Zinc uptake system ATP-binding protein ZurA (257 aa).

One can recognise an ABC transporter domain in the interval 5-241; that stretch reads IEVNNVSYHY…ADRELEILAE (237 aa). 37–44 provides a ligand contact to ATP; sequence GPNGSGKS.

It belongs to the ABC transporter superfamily.

Involved in a zinc uptake transport system. The protein is Zinc uptake system ATP-binding protein ZurA (zurA) of Listeria monocytogenes serovar 1/2a (strain ATCC BAA-679 / EGD-e).